Consider the following 522-residue polypeptide: Cytochrome P450 9c1 (522 aa).

Cys-464 is a heme binding site.

The protein belongs to the cytochrome P450 family. Heme serves as cofactor.

It is found in the endoplasmic reticulum membrane. Its subcellular location is the microsome membrane. Functionally, may be involved in the metabolism of insect hormones and in the breakdown of synthetic insecticides. The chain is Cytochrome P450 9c1 (Cyp9c1) from Drosophila melanogaster (Fruit fly).